A 291-amino-acid chain; its full sequence is Acetyl-coenzyme A carboxylase carboxyl transferase subunit beta (291 aa).

Residues 1-23 are disordered; that stretch reads MSWLSKLMPSGIRTDNTPSKKRS. The CoA carboxyltransferase N-terminal domain maps to 28 to 291; that stretch reads LWEKCSNCGS…LGRQPAPEVA (264 aa). C32, C35, C51, and C54 together coordinate Zn(2+). The C4-type zinc finger occupies 32 to 54; the sequence is CSNCGSALYRPELEENLEVCPKC.

This sequence belongs to the AccD/PCCB family. In terms of assembly, acetyl-CoA carboxylase is a heterohexamer composed of biotin carboxyl carrier protein (AccB), biotin carboxylase (AccC) and two subunits each of ACCase subunit alpha (AccA) and ACCase subunit beta (AccD). Requires Zn(2+) as cofactor.

It is found in the cytoplasm. It carries out the reaction N(6)-carboxybiotinyl-L-lysyl-[protein] + acetyl-CoA = N(6)-biotinyl-L-lysyl-[protein] + malonyl-CoA. Its pathway is lipid metabolism; malonyl-CoA biosynthesis; malonyl-CoA from acetyl-CoA: step 1/1. Its function is as follows. Component of the acetyl coenzyme A carboxylase (ACC) complex. Biotin carboxylase (BC) catalyzes the carboxylation of biotin on its carrier protein (BCCP) and then the CO(2) group is transferred by the transcarboxylase to acetyl-CoA to form malonyl-CoA. This Stenotrophomonas maltophilia (strain K279a) protein is Acetyl-coenzyme A carboxylase carboxyl transferase subunit beta.